Here is a 548-residue protein sequence, read N- to C-terminus: MKNINPTKTKSWNLLKKHFNNMKKVNIKDLFEKDKNRFSSFSICFDDIILIDYSKNIITKETIKKLIQLAKECDLNNAILSMFCGKKINYTENRAVLHTALRNHKNISIEIDGINIIPKIKKVLNKMKNFCSDLIDGNWKGFTGERITHIVNIGIGGSDLGPYMVTEALKFYKNHLNVYFVSNIDGTHITEILKYLSPKNTLFLIASKTFTTQETITNAYSAKDWFLKYAKDKKYLSRHFIALSSNIDEVKKFGINTENIFELWNWVGGRYSLWSCMGLSIALSIGFNNFEKLLRGAYAMDQHFLKQPFEKNIPIILGLISIWYNNFFNFETESILVYDQYMHLFSSYFQQVNMESNGKSIDRNGNLVNYQTGSILWGGYGTNSQHAFYQLMHQGTKIVPCDFIVPIISHNPVSDHHQKLLANFFAQTKALAFGKKSENNHIKLYKYDSNKIKILPFKILPGNRPTNSILIKEINPYNLGSLIAMYEHKIFTQGVVLNINSFDQWGVELGKQLSKKLFSILRKEKILNTSSYDSSTNGLINFYKLWKK.

The Proton donor role is filled by Glu-355. Active-site residues include His-386 and Lys-511.

It belongs to the GPI family.

The protein resides in the cytoplasm. It carries out the reaction alpha-D-glucose 6-phosphate = beta-D-fructose 6-phosphate. It participates in carbohydrate biosynthesis; gluconeogenesis. Its pathway is carbohydrate degradation; glycolysis; D-glyceraldehyde 3-phosphate and glycerone phosphate from D-glucose: step 2/4. Its function is as follows. Catalyzes the reversible isomerization of glucose-6-phosphate to fructose-6-phosphate. The chain is Glucose-6-phosphate isomerase from Wigglesworthia glossinidia brevipalpis.